Consider the following 1230-residue polypeptide: ATP-dependent helicase/nuclease subunit A (1230 aa).

In terms of domain architecture, UvrD-like helicase ATP-binding spans 3–473 (TKFTKNQQRA…IDLADNFRSQ (471 aa)). 24–31 (ASAGSGKT) contributes to the ATP binding site. In terms of domain architecture, UvrD-like helicase C-terminal spans 500–782 (EAKLVPKAAY…RIMTIHASKG (283 aa)).

The protein belongs to the helicase family. AddA subfamily. Heterodimer of AddA and AddB/RexB. Mg(2+) is required as a cofactor.

It carries out the reaction Couples ATP hydrolysis with the unwinding of duplex DNA by translocating in the 3'-5' direction.. The enzyme catalyses ATP + H2O = ADP + phosphate + H(+). The heterodimer acts as both an ATP-dependent DNA helicase and an ATP-dependent, dual-direction single-stranded exonuclease. Recognizes the chi site generating a DNA molecule suitable for the initiation of homologous recombination. The AddA nuclease domain is required for chi fragment generation; this subunit has the helicase and 3' -&gt; 5' nuclease activities. In Leuconostoc mesenteroides subsp. mesenteroides (strain ATCC 8293 / DSM 20343 / BCRC 11652 / CCM 1803 / JCM 6124 / NCDO 523 / NBRC 100496 / NCIMB 8023 / NCTC 12954 / NRRL B-1118 / 37Y), this protein is ATP-dependent helicase/nuclease subunit A.